The primary structure comprises 138 residues: Small ribosomal subunit protein uS11 (138 aa).

The span at 1 to 12 (MAQAKKGGTAAK) shows a compositional bias: low complexity. Disordered regions lie at residues 1-32 (MAQAKKGGTAAKKGQKTRRREKKNVPHGAAHI) and 119-138 (ISDVTPQPHNGCRPPKRRRV). Residues 13 to 22 (KGQKTRRREK) show a composition bias toward basic residues.

It belongs to the universal ribosomal protein uS11 family. As to quaternary structure, part of the 30S ribosomal subunit. Interacts with proteins S7 and S18. Binds to IF-3.

Functionally, located on the platform of the 30S subunit, it bridges several disparate RNA helices of the 16S rRNA. Forms part of the Shine-Dalgarno cleft in the 70S ribosome. The polypeptide is Small ribosomal subunit protein uS11 (Mycolicibacterium smegmatis (strain ATCC 700084 / mc(2)155) (Mycobacterium smegmatis)).